The chain runs to 133 residues: Histone H2A.Z (133 aa).

Residues 1-11 (MSGKGKVHGGK) show a composition bias toward basic residues. The disordered stretch occupies residues 1 to 30 (MSGKGKVHGGKGKSSEIAKSSTSHSARAGL). At S2 the chain carries N-acetylserine. N6-acetyllysine occurs at positions 4, 11, and 13.

Belongs to the histone H2A family. In terms of assembly, the nucleosome is a histone octamer containing two molecules each of H2A, H2B, H3 and H4 assembled in one H3-H4 heterotetramer and two H2A-H2B heterodimers. The octamer wraps approximately 147 bp of DNA. H2A or its variant H2A.Z forms a heterodimer with H2B. H2A.Z associates with the VPS72/SWC2 subunit of the SWR1 chromatin remodeling complex. Also interacts with RBP1/DNA-directed RNA polymerase II largest subunit. Post-translationally, acetylated once deposited into chromatin.

It localises to the nucleus. The protein resides in the chromosome. Variant histone H2A which can replace H2A in some nucleosomes. Nucleosomes wrap and compact DNA into chromatin, limiting DNA accessibility to the cellular machineries which require DNA as a template. Histones thereby play a central role in transcription regulation, DNA repair, DNA replication and chromosomal stability. DNA accessibility is regulated via a complex set of post-translational modifications of histones, also called histone code, and nucleosome remodeling. This variant is enriched at promoters, it may keep them in a repressed state until the appropriate activation signal is received. Near telomeres, it may counteract gene silencing caused by the spread of heterochromatin proteins. Required for the RNA polymerase II and SPT15/TBP recruitment to the target genes. Involved in chromosome stability. This Lodderomyces elongisporus (strain ATCC 11503 / CBS 2605 / JCM 1781 / NBRC 1676 / NRRL YB-4239) (Yeast) protein is Histone H2A.Z (HTZ1).